We begin with the raw amino-acid sequence, 297 residues long: 2,3,4,5-tetrahydropyridine-2,6-dicarboxylate N-succinyltransferase (297 aa).

Mg(2+) is bound by residues Asp148 and Glu165. Catalysis depends on Glu181, which acts as the Acyl-anhydride intermediate. Succinyl-CoA-binding positions include Arg183, Gly198, Ser201, Ala224, 239-240 (EA), Gly247, Lys258, and 271-274 (RRDS).

It belongs to the type 2 tetrahydrodipicolinate N-succinyltransferase family. As to quaternary structure, homotrimer.

The protein localises to the cytoplasm. The catalysed reaction is (S)-2,3,4,5-tetrahydrodipicolinate + succinyl-CoA + H2O = (S)-2-succinylamino-6-oxoheptanedioate + CoA. The protein operates within amino-acid biosynthesis; L-lysine biosynthesis via DAP pathway; LL-2,6-diaminopimelate from (S)-tetrahydrodipicolinate (succinylase route): step 1/3. Catalyzes the conversion of the cyclic tetrahydrodipicolinate (THDP) into the acyclic N-succinyl-L-2-amino-6-oxopimelate using succinyl-CoA. This is 2,3,4,5-tetrahydropyridine-2,6-dicarboxylate N-succinyltransferase from Corynebacterium glutamicum (strain ATCC 13032 / DSM 20300 / JCM 1318 / BCRC 11384 / CCUG 27702 / LMG 3730 / NBRC 12168 / NCIMB 10025 / NRRL B-2784 / 534).